Here is a 328-residue protein sequence, read N- to C-terminus: tRNA uridine(34) hydroxylase (328 aa).

The region spanning 130 to 224 (LDEDTVVLDT…YGKDPEVQGE (95 aa)) is the Rhodanese domain. C184 (cysteine persulfide intermediate) is an active-site residue.

It belongs to the TrhO family.

The enzyme catalyses uridine(34) in tRNA + AH2 + O2 = 5-hydroxyuridine(34) in tRNA + A + H2O. Catalyzes oxygen-dependent 5-hydroxyuridine (ho5U) modification at position 34 in tRNAs. This is tRNA uridine(34) hydroxylase from Streptococcus pyogenes serotype M6 (strain ATCC BAA-946 / MGAS10394).